Reading from the N-terminus, the 639-residue chain is Chaperone protein DnaK (639 aa).

Phosphothreonine; by autocatalysis is present on Thr-198. The disordered stretch occupies residues 597–639; the sequence is AYSAGQSAEGAPHAAGAEASAQSRTDDGVVDADFEEVDEKKGH. Low complexity predominate over residues 603-617; sequence SAEGAPHAAGAEASA. Residues 624 to 633 are compositionally biased toward acidic residues; it reads GVVDADFEEV.

The protein belongs to the heat shock protein 70 family.

In terms of biological role, acts as a chaperone. This chain is Chaperone protein DnaK, found in Rhodospirillum rubrum (strain ATCC 11170 / ATH 1.1.1 / DSM 467 / LMG 4362 / NCIMB 8255 / S1).